We begin with the raw amino-acid sequence, 2564 residues long: Histone-lysine N-methyltransferase SETD2 (2564 aa).

A compositionally biased stretch (pro residues) spans 1 to 11 (MKQLQPQPPPK). The interval 1–30 (MKQLQPQPPPKMGDFYDPEHPTPEEEENEA) is disordered. Over residues 17-30 (DPEHPTPEEEENEA) the composition is skewed to basic and acidic residues. Residue Ser-131 is modified to Phosphoserine. Disordered regions lie at residues 180-211 (STTVDSPPSSPPPPPPPAQATTLSSPAPVTEP), 272-561 (NEQA…TLSK), and 607-626 (PEREKAGSPAPSNRLNDSPT). Residues 187–197 (PSSPPPPPPPA) show a composition bias toward pro residues. Positions 198–207 (QATTLSSPAP) are enriched in low complexity. The segment covering 278–290 (SSKKEDSHIGKDE) has biased composition (basic and acidic residues). Residues Ser-321, Ser-323, and Ser-344 each carry the phosphoserine modification. Composition is skewed to basic and acidic residues over residues 335–400 (RSHD…ERER), 421–432 (RSERSHYYDSDR), 439–467 (PYRERTRYSRPYTDNRARESSDSEEEYKK), and 479–528 (SYRD…EAIK). Lys-359 participates in a covalent cross-link: Glycyl lysine isopeptide (Lys-Gly) (interchain with G-Cter in SUMO2). Ser-422 carries the phosphoserine modification. Residues Ser-532, Ser-614, and Ser-624 each carry the phosphoserine modification. Polar residues predominate over residues 616-625 (APSNRLNDSP). The residue at position 626 (Thr-626) is a Phosphothreonine. Residue Lys-637 forms a Glycyl lysine isopeptide (Lys-Gly) (interchain with G-Cter in SUMO2) linkage. Residues Ser-698, Ser-708, Ser-744, and Ser-754 each carry the phosphoserine modification. Residue Lys-776 forms a Glycyl lysine isopeptide (Lys-Gly) (interchain with G-Cter in SUMO2) linkage. 5 disordered regions span residues 964–995 (EEGNSILPERRGRPEISLDERGEGGHVHTSDD), 1036–1101 (EDYS…SDHW), 1133–1233 (LHKG…LGKT), 1264–1352 (QEKP…FSDQ), and 1393–1443 (LEKN…PGSA). Over residues 971–994 (PERRGRPEISLDERGEGGHVHTSD) the composition is skewed to basic and acidic residues. Over residues 1045–1058 (SNDESDSEDTDSDD) the composition is skewed to acidic residues. Low complexity predominate over residues 1084–1095 (SPCSSRSSQSYR). Ser-1098 is subject to Phosphoserine. The span at 1162–1171 (HPQSDGVDST) shows a compositional bias: polar residues. Basic and acidic residues predominate over residues 1172 to 1191 (SHTDVKSDPLGHPNSEETVK). Positions 1215–1225 (KSWQQTTFQNR) are enriched in polar residues. Ser-1228 bears the Phosphoserine mark. Polar residues predominate over residues 1265-1276 (EKPSTTYQQPDS). Over residues 1393–1403 (LEKNDIKDRGP) the composition is skewed to basic and acidic residues. A phosphoserine mark is found at Ser-1413, Ser-1415, and Ser-1417. Residues 1418-1714 (DGELQDRKKV…KKERSRKKDS (297 aa)) form an interaction with TUBA1A region. Over residues 1421 to 1431 (LQDRKKVRVEV) the composition is skewed to basic and acidic residues. Residues 1494–1548 (IKRMQCECTPLSKDERAQGEIACGEDCLNRLLMIECSSRCPNGDYCSNRRFQRKQ) enclose the AWS domain. Zn(2+) is bound by residues Cys-1499, Cys-1501, Cys-1516, Cys-1520, Cys-1529, Cys-1533, and Cys-1539. In terms of domain architecture, SET spans 1550 to 1667 (ADVEVILTEK…SGSELTFDYQ (118 aa)). Residues 1560–1562 (KGW), 1603–1605 (HYY), and 1628–1629 (NH) each bind S-adenosyl-L-methionine. Cys-1631 is a binding site for Zn(2+). Residues 1674–1690 (EAQKCFCGSANCRGYLG) form the Post-SET domain. Gln-1676 contributes to the S-adenosyl-L-methionine binding site. Cys-1678 contributes to the Zn(2+) binding site. Position 1679 (Phe-1679) interacts with S-adenosyl-L-methionine. Zn(2+) contacts are provided by Cys-1680 and Cys-1685. 3 positions are modified to phosphoserine: Ser-1696, Ser-1844, and Ser-1845. Positions 1831 to 1872 (KTAVPPLSEGDGYSSENTSRAHTPLNTPDPSTKLSTEADTDT) are disordered. Over residues 1844–1867 (SSENTSRAHTPLNTPDPSTKLSTE) the composition is skewed to polar residues. Thr-1853 and Thr-1872 each carry phosphothreonine. Ser-1888 carries the post-translational modification Phosphoserine. Positions 1921 to 2142 (EELQSQQLLP…EAQKQQQQMQ (222 aa)) are disordered. Residues 1924–1935 (QSQQLLPQQLPE) show a composition bias toward low complexity. Ser-1952 bears the Phosphoserine mark. Residues 1960-1972 (IEPKESNGTKLEE) show a composition bias toward basic and acidic residues. Over residues 1973 to 1990 (PINEETPSQDEEEGVSDV) the composition is skewed to acidic residues. Ser-1980, Ser-1988, and Ser-1995 each carry phosphoserine. Composition is skewed to basic and acidic residues over residues 1991–2004 (ESERSQEQPDKTVD), 2014–2046 (DSWKDLKEVYRIPKKSQTEKENTTTERGRDAVG), and 2059–2072 (RSRERDPDKQTQNK). Phosphoserine is present on residues Ser-2080 and Ser-2082. Basic and acidic residues-rich tracts occupy residues 2090 to 2100 (RGTKRPDDRYD) and 2111 to 2135 (KDRNKLSTEERRKLFEQEVAQREAQ). The stretch at 2117-2146 (STEERRKLFEQEVAQREAQKQQQQMQNLGM) forms a coiled coil. Residues 2137–2366 (QQQQMQNLGM…APGQPQPLQP (230 aa)) form a low charge region region. The WW domain occupies 2389–2422 (IVLPPNWKTARDPEGKIYYYHVITRQTQWDPPTW). Residues 2439–2465 (LGTPTYDENPMKASKKPKTAEADTSSE) form a disordered region. The interaction with POLR2A stretch occupies residues 2457-2564 (TAEADTSSEL…YKPKEDTELE (108 aa)).

It belongs to the class V-like SAM-binding methyltransferase superfamily. Histone-lysine methyltransferase family. SET2 subfamily. As to quaternary structure, specifically interacts with hyperphosphorylated C-terminal domain (CTD) of RNA polymerase II large subunit (POLR2A): binds to CTD heptad repeats doubly phosphorylated on 'Ser-2' and 'Ser-5' of each heptad. Interacts with HTT. Interacts with IWS1. Interacts with p53/TP53; leading to regulate p53/TP53 target genes. Component of a complex with HNRNPL. Interacts with TUBA1A; the interaction is independent on alpha-tubulin acetylation on 'Lys-40'. Interacts with STAT1. May be automethylated. As to expression, ubiquitously expressed.

It localises to the nucleus. The protein localises to the chromosome. It catalyses the reaction L-lysyl(36)-[histone H3] + 3 S-adenosyl-L-methionine = N(6),N(6),N(6)-trimethyl-L-lysyl(36)-[histone H3] + 3 S-adenosyl-L-homocysteine + 3 H(+). The catalysed reaction is L-lysyl-[protein] + S-adenosyl-L-methionine = N(6)-methyl-L-lysyl-[protein] + S-adenosyl-L-homocysteine + H(+). The enzyme catalyses L-lysyl-[protein] + 3 S-adenosyl-L-methionine = N(6),N(6),N(6)-trimethyl-L-lysyl-[protein] + 3 S-adenosyl-L-homocysteine + 3 H(+). With respect to regulation, specifically inhibited by sinefungin derivatives. N-propyl sinefungin (Pr-SNF) interacts preferentially with SETD2. Histone methyltransferase that specifically trimethylates 'Lys-36' of histone H3 (H3K36me3) using dimethylated 'Lys-36' (H3K36me2) as substrate. It is capable of trimethylating unmethylated H3K36 (H3K36me0) in vitro. Represents the main enzyme generating H3K36me3, a specific tag for epigenetic transcriptional activation. Plays a role in chromatin structure modulation during elongation by coordinating recruitment of the FACT complex and by interacting with hyperphosphorylated POLR2A. Acts as a key regulator of DNA mismatch repair in G1 and early S phase by generating H3K36me3, a mark required to recruit MSH6 subunit of the MutS alpha complex: early recruitment of the MutS alpha complex to chromatin to be replicated allows a quick identification of mismatch DNA to initiate the mismatch repair reaction. Required for DNA double-strand break repair in response to DNA damage: acts by mediating formation of H3K36me3, promoting recruitment of RAD51 and DNA repair via homologous recombination (HR). Acts as a tumor suppressor. H3K36me3 also plays an essential role in the maintenance of a heterochromatic state, by recruiting DNA methyltransferase DNMT3A. H3K36me3 is also enhanced in intron-containing genes, suggesting that SETD2 recruitment is enhanced by splicing and that splicing is coupled to recruitment of elongating RNA polymerase. Required during angiogenesis. Required for endoderm development by promoting embryonic stem cell differentiation toward endoderm: acts by mediating formation of H3K36me3 in distal promoter regions of FGFR3, leading to regulate transcription initiation of FGFR3. In addition to histones, also mediates methylation of other proteins, such as tubulins and STAT1. Trimethylates 'Lys-40' of alpha-tubulins such as TUBA1B (alpha-TubK40me3); alpha-TubK40me3 is required for normal mitosis and cytokinesis and may be a specific tag in cytoskeletal remodeling. Involved in interferon-alpha-induced antiviral defense by mediating both monomethylation of STAT1 at 'Lys-525' and catalyzing H3K36me3 on promoters of some interferon-stimulated genes (ISGs) to activate gene transcription. Functionally, (Microbial infection) Recruited to the promoters of adenovirus 12 E1A gene in case of infection, possibly leading to regulate its expression. The sequence is that of Histone-lysine N-methyltransferase SETD2 (SETD2) from Homo sapiens (Human).